Reading from the N-terminus, the 438-residue chain is MESQQLHQNPHSLHGSAYASVTSKEVPSNQDPLAVSASNLPEFDRDSTKVNSQQETTPGTSAVPENHHHVSPQPASVPPPQNGQYQQHGMMTPNKAMASNWAHYQQPSMMTCSHYQTSPAYYQPDPHYPLPQYIPPLSTSSPDPIDSQNQHSEVPQAETKVRNNVLPPHTLTSEENFSTWVKFYIRFLKNSNLGDIIPNDQGEIKSQMTYEEHAYIYNTFQAFAPFHLLPTWVKQILEINYADILTVLCKSVSKMQTNNQELKDWIALANLEYDGSTSADTFEITVSTIIQRLKENNINVSDRLACQLILKGLSGDFKYLRNQYRTKTNMKLSQLFAEIQLIYDENKIMNLNKPSQYKQHSEYKNVSRTSPNTTNTKVTTRNYHRTNSSKPRAAKAHNIATSSKFSRVNNDHINESTVSSQYLSDDNELSLRPATERI.

Composition is skewed to polar residues over residues 1 to 11, 19 to 39, and 49 to 60; these read MESQQLHQNPH, ASVT…SASN, and KVNSQQETTPGT. Disordered regions lie at residues 1–86, 366–397, and 419–438; these read MESQ…GQYQ, VSRT…AKAH, and SSQY…TERI. The tract at residues 295–397 is RNA-binding; sequence ENNINVSDRL…SSKPRAAKAH (103 aa). Residues 369–381 show a composition bias toward low complexity; sequence TSPNTTNTKVTTR.

In terms of assembly, homotrimer.

The protein localises to the cytoplasm. In terms of biological role, capsid protein (CA) is the structural component of the virus-like particle (VLP), forming the shell that encapsulates the retrotransposons dimeric RNA genome. The particles are assembled from trimer-clustered units and there are holes in the capsid shells that allow for the diffusion of macromolecules. CA also has nucleocapsid-like chaperone activity, promoting primer tRNA(i)-Met annealing to the multipartite primer-binding site (PBS), dimerization of Ty2 RNA and initiation of reverse transcription. In Saccharomyces cerevisiae (strain ATCC 204508 / S288c) (Baker's yeast), this protein is Transposon Ty2-F Gag polyprotein (TY2A-F).